The primary structure comprises 251 residues: Hydroxyacylglutathione hydrolase (251 aa).

Histidine 53, histidine 55, aspartate 57, histidine 58, histidine 110, aspartate 127, and histidine 165 together coordinate Zn(2+).

This sequence belongs to the metallo-beta-lactamase superfamily. Glyoxalase II family. As to quaternary structure, monomer. It depends on Zn(2+) as a cofactor.

The catalysed reaction is an S-(2-hydroxyacyl)glutathione + H2O = a 2-hydroxy carboxylate + glutathione + H(+). It participates in secondary metabolite metabolism; methylglyoxal degradation; (R)-lactate from methylglyoxal: step 2/2. In terms of biological role, thiolesterase that catalyzes the hydrolysis of S-D-lactoyl-glutathione to form glutathione and D-lactic acid. This Yersinia pestis (strain Pestoides F) protein is Hydroxyacylglutathione hydrolase.